Consider the following 309-residue polypeptide: tRNA dimethylallyltransferase (309 aa).

10-17 provides a ligand contact to ATP; sequence GPTASGKT. 12-17 provides a ligand contact to substrate; that stretch reads TASGKT. Interaction with substrate tRNA regions lie at residues 35–38 and 240–245; these read DSAL and RCVGYR.

It belongs to the IPP transferase family. In terms of assembly, monomer. Mg(2+) serves as cofactor.

It carries out the reaction adenosine(37) in tRNA + dimethylallyl diphosphate = N(6)-dimethylallyladenosine(37) in tRNA + diphosphate. Functionally, catalyzes the transfer of a dimethylallyl group onto the adenine at position 37 in tRNAs that read codons beginning with uridine, leading to the formation of N6-(dimethylallyl)adenosine (i(6)A). In Baumannia cicadellinicola subsp. Homalodisca coagulata, this protein is tRNA dimethylallyltransferase.